The following is a 396-amino-acid chain: 1-deoxy-D-xylulose 5-phosphate reductoisomerase (396 aa).

6 residues coordinate NADPH: threonine 15, glycine 16, serine 17, isoleucine 18, glycine 41, and asparagine 129. Residue lysine 130 coordinates 1-deoxy-D-xylulose 5-phosphate. Glutamate 131 provides a ligand contact to NADPH. Aspartate 155 contributes to the Mn(2+) binding site. Serine 156, glutamate 157, serine 182, and histidine 205 together coordinate 1-deoxy-D-xylulose 5-phosphate. Glutamate 157 is a Mn(2+) binding site. NADPH is bound at residue glycine 211. Positions 218, 223, 224, and 227 each coordinate 1-deoxy-D-xylulose 5-phosphate. Glutamate 227 contacts Mn(2+).

This sequence belongs to the DXR family. Mg(2+) serves as cofactor. Requires Mn(2+) as cofactor.

It catalyses the reaction 2-C-methyl-D-erythritol 4-phosphate + NADP(+) = 1-deoxy-D-xylulose 5-phosphate + NADPH + H(+). It functions in the pathway isoprenoid biosynthesis; isopentenyl diphosphate biosynthesis via DXP pathway; isopentenyl diphosphate from 1-deoxy-D-xylulose 5-phosphate: step 1/6. Functionally, catalyzes the NADPH-dependent rearrangement and reduction of 1-deoxy-D-xylulose-5-phosphate (DXP) to 2-C-methyl-D-erythritol 4-phosphate (MEP). This is 1-deoxy-D-xylulose 5-phosphate reductoisomerase from Xanthomonas campestris pv. campestris (strain B100).